Here is a 371-residue protein sequence, read N- to C-terminus: Transposase for insertion sequence element IS421 (371 aa).

Belongs to the transposase 11 family.

Functionally, involved in the transposition of the insertion sequence IS421. The polypeptide is Transposase for insertion sequence element IS421 (Escherichia coli).